The following is a 975-amino-acid chain: Aminopeptidase N (975 aa).

The Cytoplasmic segment spans residues 1–11 (MAKGFYISKAL). The helical; Signal-anchor for type II membrane protein transmembrane segment at 12–32 (GILAIVLGIAAVSTIIALSVV) threads the bilayer. A cytosolic Ser/Thr-rich junction region spans residues 33–74 (YAQEKNKNAESSPVSSPVSSPVSSPVSPTNPSTTAATTLAQS). The Extracellular portion of the chain corresponds to 33 to 975 (YAQEKNKNAE…VLQWFRENSQ (943 aa)). The tract at residues 41–68 (AESSPVSSPVSSPVSSPVSPTNPSTTAA) is disordered. Residues 43 to 59 (SSPVSSPVSSPVSSPVS) show a composition bias toward low complexity. The tract at residues 75-975 (KPWNHYRLPK…VLQWFRENSQ (901 aa)) is metalloprotease. An N-linked (GlcNAc...) asparagine glycan is attached at Asn134. Tyr182 carries the sulfotyrosine modification. Asn240 and Asn271 each carry an N-linked (GlcNAc...) asparagine glycan. 358 to 362 (GAMEN) lines the substrate pocket. His394 provides a ligand contact to Zn(2+). Glu395 acts as the Proton acceptor in catalysis. His398 and Glu417 together coordinate Zn(2+). Sulfotyrosine is present on residues Tyr425 and Tyr430. Asn533, Asn580, Asn633, Asn689, and Asn747 each carry an N-linked (GlcNAc...) asparagine glycan. 2 disulfides stabilise this stretch: Cys769–Cys776 and Cys806–Cys842. Asn826 carries N-linked (GlcNAc...) asparagine glycosylation.

Belongs to the peptidase M1 family. As to quaternary structure, (Microbial infection) Interacts with CCoV spike glycoprotein. In terms of assembly, homodimer. Interacts with SLC6A19. Requires Zn(2+) as cofactor. In terms of processing, sulfated. Post-translationally, N- and O-glycosylated. May undergo proteolysis and give rise to a soluble form.

It localises to the cell membrane. The catalysed reaction is Release of an N-terminal amino acid, Xaa-|-Yaa- from a peptide, amide or arylamide. Xaa is preferably Ala, but may be most amino acids including Pro (slow action). When a terminal hydrophobic residue is followed by a prolyl residue, the two may be released as an intact Xaa-Pro dipeptide.. Functionally, broad specificity aminopeptidase which plays a role in the final digestion of peptides generated from hydrolysis of proteins by gastric and pancreatic proteases. Also involved in the processing of various peptides including peptide hormones, such as angiotensin III and IV, neuropeptides, and chemokines. May also be involved the cleavage of peptides bound to major histocompatibility complex class II molecules of antigen presenting cells. May have a role in angiogenesis and promote cholesterol crystallization. May have a role in amino acid transport by acting as binding partner of amino acid transporter SLC6A19 and regulating its activity. In terms of biological role, (Microbial infection) Probable receptor for canine coronavirus (CCoV). The sequence is that of Aminopeptidase N (ANPEP) from Canis lupus familiaris (Dog).